The chain runs to 367 residues: Choline-phosphate cytidylyltransferase A (367 aa).

Met-1 bears the N-acetylmethionine mark. The tract at residues Met-1–Pro-31 is disordered. Lys-8 is modified (N6-acetyllysine). CTP contacts are provided by Ile-84, Phe-85, His-92, and Lys-122. Phosphocholine contacts are provided by Lys-122 and Trp-151. Positions 168, 169, 173, 195, 196, 197, and 200 each coordinate CTP. Amphipathic regions lie at residues Lys-228–Gly-287 and Ala-298–Ser-315. The residue at position 233 (Ser-233) is a Phosphoserine. The segment at Ile-272–Phe-293 is autoinhibitory (AI). A disordered region spans residues Ala-313 to Asp-367. Ser-315 carries the post-translational modification Phosphoserine; by PKC. A compositionally biased stretch (polar residues) spans Ser-315–Pro-324. 4 positions are modified to phosphoserine: Ser-319, Ser-321, Ser-322, and Ser-323. Repeat 1 spans residues Ser-319–Pro-324. The tract at residues Ser-319–Pro-348 is 3 X repeats. Thr-325 bears the Phosphothreonine mark. Ser-329 and Ser-331 each carry phosphoserine. Residues Ser-329–Ser-333 form a 2; approximate repeat. Residues Pro-330–Ser-352 are compositionally biased toward low complexity. Position 333 is a phosphoserine; by PKC (Ser-333). At Thr-342 the chain carries Phosphothreonine. Phosphoserine is present on residues Ser-343, Ser-345, Ser-346, Ser-347, Ser-350, and Ser-352. Residues Ser-343–Pro-348 form repeat 3. Thr-358 is subject to Phosphothreonine. At Ser-362 the chain carries Phosphoserine; by CK2.

It belongs to the cytidylyltransferase family. As to quaternary structure, homodimer. Post-translationally, the serine residues of the C-terminus are phosphorylated. The inactive soluble form is stabilized by phosphorylation, the active membrane bound form is promoted by anionic lipids or diacylglycerol, and is stabilized by dephosphorylation. The N-terminus is blocked. In terms of processing, monoubiquitinated by the SCF(FBXL2) complex, leading to proteasomal degradation.

The protein localises to the cytoplasm. The protein resides in the cytosol. Its subcellular location is the membrane. It localises to the endoplasmic reticulum membrane. It is found in the nucleus. It carries out the reaction phosphocholine + CTP + H(+) = CDP-choline + diphosphate. It participates in phospholipid metabolism; phosphatidylcholine biosynthesis; phosphatidylcholine from phosphocholine: step 1/2. Its activity is regulated as follows. Interconverts between an inactive cytosolic form and an active membrane-bound form. Activation involves disruption of an inhibitory interaction between helices at the base of the active site and the autoinhibitory (AI) region. Activated by N-methylethanolamine. Activated by oleic acid-containing phosphatidylcholine vesicles. In terms of biological role, catalyzes the key rate-limiting step in the CDP-choline pathway for phosphatidylcholine biosynthesis. The polypeptide is Choline-phosphate cytidylyltransferase A (Pcyt1a) (Rattus norvegicus (Rat)).